A 192-amino-acid polypeptide reads, in one-letter code: MILASNSQRRQEILKDAGFNFKVITSNIEEISDKKNITERILDIAEKKLEQIAKNNINEFVLAADTVVELDGKILGKPKNREEAFRFLKSLSGKVHRVITAYVFKNISKNILIREVVVSEVKFFDLDDDTINWYLDTDEPFDKAGAYGIQGYGRILVEKINGDYYSIMGFPISNFLENLRKIGYKISLIDKI.

Aspartate 65 (proton acceptor) is an active-site residue.

This sequence belongs to the Maf family. YhdE subfamily. It depends on a divalent metal cation as a cofactor.

The protein localises to the cytoplasm. The catalysed reaction is dTTP + H2O = dTMP + diphosphate + H(+). The enzyme catalyses UTP + H2O = UMP + diphosphate + H(+). Its function is as follows. Nucleoside triphosphate pyrophosphatase that hydrolyzes dTTP and UTP. May have a dual role in cell division arrest and in preventing the incorporation of modified nucleotides into cellular nucleic acids. This Fusobacterium nucleatum subsp. nucleatum (strain ATCC 25586 / DSM 15643 / BCRC 10681 / CIP 101130 / JCM 8532 / KCTC 2640 / LMG 13131 / VPI 4355) protein is dTTP/UTP pyrophosphatase.